The primary structure comprises 421 residues: Gamma-glutamyl phosphate reductase (421 aa).

Belongs to the gamma-glutamyl phosphate reductase family.

The protein localises to the cytoplasm. It catalyses the reaction L-glutamate 5-semialdehyde + phosphate + NADP(+) = L-glutamyl 5-phosphate + NADPH + H(+). Its pathway is amino-acid biosynthesis; L-proline biosynthesis; L-glutamate 5-semialdehyde from L-glutamate: step 2/2. Its function is as follows. Catalyzes the NADPH-dependent reduction of L-glutamate 5-phosphate into L-glutamate 5-semialdehyde and phosphate. The product spontaneously undergoes cyclization to form 1-pyrroline-5-carboxylate. The protein is Gamma-glutamyl phosphate reductase of Pseudomonas aeruginosa (strain LESB58).